Reading from the N-terminus, the 65-residue chain is MVSVQINDNESIDKMLKRFKKKYERAGVLKEFRKRAYFVKPSVDSRLKRSRCKRRAQRANEESNS.

It belongs to the bacterial ribosomal protein bS21 family.

This is Small ribosomal subunit protein bS21 from Chlorobium limicola (strain DSM 245 / NBRC 103803 / 6330).